Here is a 506-residue protein sequence, read N- to C-terminus: Squalene monooxygenase 1,1 (506 aa).

Transmembrane regions (helical) follow at residues leucine 3 to phenylalanine 23 and aspartate 47 to alanine 67. FAD contacts are provided by residues valine 57–glycine 58, glutamate 77–arginine 78, arginine 85, phenylalanine 90, arginine 157, valine 173, aspartate 336, and methionine 349. The chain crosses the membrane as a helical span at residues leucine 447 to proline 467.

The protein belongs to the squalene monooxygenase family. FAD serves as cofactor.

It is found in the membrane. It catalyses the reaction squalene + reduced [NADPH--hemoprotein reductase] + O2 = (S)-2,3-epoxysqualene + oxidized [NADPH--hemoprotein reductase] + H2O + H(+). The protein operates within terpene metabolism; lanosterol biosynthesis; lanosterol from farnesyl diphosphate: step 2/3. In terms of biological role, catalyzes the stereospecific oxidation of squalene to (S)-2,3-epoxysqualene, and is considered to be a rate-limiting enzyme in steroid biosynthesis. The chain is Squalene monooxygenase 1,1 (SQP1,1) from Brassica napus (Rape).